A 255-amino-acid chain; its full sequence is Small ribosomal subunit protein uS2 (255 aa).

Residues 232-255 are disordered; it reads ASGRDLGASEEVPVEPALEEASEA.

This sequence belongs to the universal ribosomal protein uS2 family.

In Rhizobium meliloti (strain 1021) (Ensifer meliloti), this protein is Small ribosomal subunit protein uS2.